The chain runs to 550 residues: Methionine--tRNA ligase (550 aa).

Positions 13-23 (PYANGEIHLGH) match the 'HIGH' region motif. Positions 144, 147, 157, and 160 each coordinate Zn(2+). Residues 329-333 (KMSKS) carry the 'KMSKS' region motif. Lysine 332 provides a ligand contact to ATP.

It belongs to the class-I aminoacyl-tRNA synthetase family. MetG type 1 subfamily. Monomer. Zn(2+) is required as a cofactor.

The protein resides in the cytoplasm. It catalyses the reaction tRNA(Met) + L-methionine + ATP = L-methionyl-tRNA(Met) + AMP + diphosphate. Is required not only for elongation of protein synthesis but also for the initiation of all mRNA translation through initiator tRNA(fMet) aminoacylation. In Ruthia magnifica subsp. Calyptogena magnifica, this protein is Methionine--tRNA ligase.